Here is a 233-residue protein sequence, read N- to C-terminus: Large ribosomal subunit protein uL1 (233 aa).

It belongs to the universal ribosomal protein uL1 family. Part of the 50S ribosomal subunit.

Its function is as follows. Binds directly to 23S rRNA. The L1 stalk is quite mobile in the ribosome, and is involved in E site tRNA release. Protein L1 is also a translational repressor protein, it controls the translation of the L11 operon by binding to its mRNA. This is Large ribosomal subunit protein uL1 from Shewanella piezotolerans (strain WP3 / JCM 13877).